Here is a 202-residue protein sequence, read N- to C-terminus: uncharacterized protein (202 aa).

The helical transmembrane segment at 18–38 (FLIFLIFLSVLGCGITISGCI) threads the bilayer.

The protein resides in the membrane. This is an uncharacterized protein from Methanocaldococcus jannaschii (strain ATCC 43067 / DSM 2661 / JAL-1 / JCM 10045 / NBRC 100440) (Methanococcus jannaschii).